The sequence spans 80 residues: Defensin-like protein 18 (80 aa).

Residues methionine 1–alanine 29 form the signal peptide. Cystine bridges form between cysteine 32/cysteine 80, cysteine 43/cysteine 64, cysteine 49/cysteine 74, and cysteine 53/cysteine 76.

It belongs to the DEFL family.

It is found in the secreted. In terms of biological role, confers broad-spectrum resistance to pathogens. In Arabidopsis thaliana (Mouse-ear cress), this protein is Defensin-like protein 18 (PDF1.5).